A 556-amino-acid chain; its full sequence is Glucomannan 4-beta-mannosyltransferase 7 (556 aa).

A helical transmembrane segment spans residues 58-78 (VVVPVFKFLVLLCLVMSVMFF). Residue aspartate 158 is part of the active site. Residues aspartate 217 and aspartate 219 each coordinate substrate. The active site involves aspartate 311. 4 consecutive transmembrane segments (helical) span residues 390-410 (IVAHILTFCFYCVILPATVLF), 426-448 (LITLLIAIGRLRSIHLLAFWVLF), 502-522 (LLELLVGAYLLFCGIYDIVYG), and 526-546 (LYVYLLFQSVAFFVVGFGFVG).

The protein belongs to the glycosyltransferase 2 family. Plant cellulose synthase-like A subfamily. Ubiquitous.

The protein resides in the golgi apparatus membrane. The catalysed reaction is GDP-mannose + (glucomannan)n = GDP + (glucomannan)n+1.. In terms of biological role, probable mannan synthase which consists of a 4-beta-mannosyltransferase activity on mannan using GDP-mannose. The beta-1,4-mannan product is the backbone for galactomannan synthesis by galactomannan galactosyltransferase. Galactomannan is a noncellulosic polysaccharides of plant cell wall. Required for synthesis of a cell wall polysaccharide essential for pollen tube growth, for cell wall structure, or for signaling during plant embryo development. The sequence is that of Glucomannan 4-beta-mannosyltransferase 7 from Arabidopsis thaliana (Mouse-ear cress).